The sequence spans 289 residues: ADP-polyphosphate phosphotransferase (289 aa).

It belongs to the polyphosphate kinase 2 (PPK2) family. Class I subfamily.

The enzyme catalyses [phosphate](n) + ATP = [phosphate](n+1) + ADP. In terms of biological role, uses inorganic polyphosphate (polyP) as a donor to convert ADP to ATP. The polypeptide is ADP-polyphosphate phosphotransferase (Rhodopseudomonas palustris (strain ATCC BAA-98 / CGA009)).